The primary structure comprises 372 residues: Ca(2+)/H(+) antiporter (372 aa).

11 helical membrane-spanning segments follow: residues 7 to 27 (IFLVLLVFCPLSFAAHWLGWG), 29 to 49 (TTVFILAGLAIVPLAAFMGTA), 62 to 82 (GGLLNATFGNATELILAYIAL), 94 to 114 (LTGSIIGNLLLVMGFAVFLGG), 134 to 154 (MNLGVVAILLPTALQYTSTGV), 162 to 182 (LSVAVAVVLIGVYLLSLVFSM), 222 to 242 (LWTGVLLVVTLGVAVESELLV), 251 to 271 (SLGLTALFTGVIVLPIIGNAA), 294 to 314 (GSSLQIAFFVAPVLVIVGWAI), 320 to 340 (LNFNPFELVAVLVAVLIVNSI), and 352 to 372 (ILLLATYAIVALAFFFHPTLV).

It belongs to the Ca(2+):cation antiporter (CaCA) (TC 2.A.19) family. Cation/proton exchanger (CAX) subfamily.

It is found in the cell inner membrane. Its function is as follows. Ca(+)/H(+) antiporter that extrudes calcium in exchange for external protons. Plays an important role in salt tolerance. Does not transport sodium or lithium. In Synechocystis sp. (strain ATCC 27184 / PCC 6803 / Kazusa), this protein is Ca(2+)/H(+) antiporter.